Here is a 153-residue protein sequence, read N- to C-terminus: UPF0735 ACT domain-containing protein FN1487 (153 aa).

One can recognise an ACT domain in the interval 76-152 (SLHLSLKDRV…GIADIRITGS (77 aa)).

It belongs to the UPF0735 family.

This chain is UPF0735 ACT domain-containing protein FN1487, found in Fusobacterium nucleatum subsp. nucleatum (strain ATCC 25586 / DSM 15643 / BCRC 10681 / CIP 101130 / JCM 8532 / KCTC 2640 / LMG 13131 / VPI 4355).